The sequence spans 277 residues: Sulfur carrier protein FdhD (277 aa).

Catalysis depends on cysteine 121, which acts as the Cysteine persulfide intermediate. Residue 260–265 (FCKPGR) coordinates Mo-bis(molybdopterin guanine dinucleotide).

Belongs to the FdhD family.

Its subcellular location is the cytoplasm. Required for formate dehydrogenase (FDH) activity. Acts as a sulfur carrier protein that transfers sulfur from IscS to the molybdenum cofactor prior to its insertion into FDH. The sequence is that of Sulfur carrier protein FdhD from Shigella flexneri serotype 5b (strain 8401).